Consider the following 188-residue polypeptide: MGLKADSWIKKMSLEHGMISPFCEKQVGKNVISYGLSSYGYDIRVGSEFMLFDNKNALIDPKNFDPNNATKIDASKEGYFILPANAFALAHTIEYFKMPKDTLAICLGKSTYARCGIIVNVTPFEPEFEGYITIEISNTTNLPAKVYANEGIAQVVFLQGDEMCEQSYKDRGGKYQGQVGITLPKILK.

109–114 (KSTYAR) contacts dCTP. The active-site Proton donor/acceptor is the Glu135. DCTP-binding residues include Gln154, Tyr168, and Gln178.

The protein belongs to the dCTP deaminase family. Homotrimer.

It catalyses the reaction dCTP + H2O + H(+) = dUTP + NH4(+). Its pathway is pyrimidine metabolism; dUMP biosynthesis; dUMP from dCTP (dUTP route): step 1/2. Catalyzes the deamination of dCTP to dUTP. The protein is dCTP deaminase of Helicobacter pylori (strain P12).